Reading from the N-terminus, the 293-residue chain is Probable mediator of RNA polymerase II transcription subunit 15b (293 aa).

It belongs to the plant Mediator complex subunit 15 family. As to quaternary structure, component of the Mediator complex.

It is found in the nucleus. In terms of biological role, component of the Mediator complex, a coactivator involved in the regulated transcription of nearly all RNA polymerase II-dependent genes. Mediator functions as a bridge to convey information from gene-specific regulatory proteins to the basal RNA polymerase II transcription machinery. The Mediator complex, having a compact conformation in its free form, is recruited to promoters by direct interactions with regulatory proteins and serves for the assembly of a functional preinitiation complex with RNA polymerase II and the general transcription factors. In Arabidopsis thaliana (Mouse-ear cress), this protein is Probable mediator of RNA polymerase II transcription subunit 15b (MED15B).